The primary structure comprises 124 residues: Ubiquitin-related modifier 1 (124 aa).

The tract at residues 34–53 (IPSLVPKDNTTSAKNPPPKD) is disordered. The residue at position 124 (glycine 124) is a 1-thioglycine. Glycine 124 participates in a covalent cross-link: Glycyl lysine isopeptide (Gly-Lys) (interchain with K-? in acceptor proteins).

The protein belongs to the URM1 family. In terms of processing, C-terminal thiocarboxylation occurs in 2 steps, it is first acyl-adenylated (-COAMP) via the hesA/moeB/thiF part of UBA4, then thiocarboxylated (-COSH) via the rhodanese domain of UBA4.

The protein localises to the cytoplasm. The protein operates within tRNA modification; 5-methoxycarbonylmethyl-2-thiouridine-tRNA biosynthesis. In terms of biological role, acts as a sulfur carrier required for 2-thiolation of mcm(5)S(2)U at tRNA wobble positions of cytosolic tRNA(Lys), tRNA(Glu) and tRNA(Gln). Serves as sulfur donor in tRNA 2-thiolation reaction by being thiocarboxylated (-COSH) at its C-terminus by the MOCS3 homolog UBA4. The sulfur is then transferred to tRNA to form 2-thiolation of mcm(5)S(2)U. Prior mcm(5) tRNA modification by the elongator complex is required for 2-thiolation. Also acts as a ubiquitin-like protein (UBL) that is covalently conjugated via an isopeptide bond to lysine residues of target proteins such as AHP1. The thiocarboxylated form serves as substrate for conjugation and oxidative stress specifically induces the formation of UBL-protein conjugates. This is Ubiquitin-related modifier 1 from Coprinopsis cinerea (strain Okayama-7 / 130 / ATCC MYA-4618 / FGSC 9003) (Inky cap fungus).